Reading from the N-terminus, the 256-residue chain is ATP synthase peripheral stalk subunit b, mitochondrial (256 aa).

The transit peptide at 1 to 42 (MLSRVVLSAAATAAPSLKNAAFLGPGVLQATRTFHTGQPHLV) directs the protein to the mitochondrion. Residue lysine 131 is modified to N6-succinyllysine. 6 positions are modified to N6-acetyllysine: lysine 139, lysine 154, lysine 162, lysine 221, lysine 233, and lysine 244.

The protein belongs to the eukaryotic ATPase B chain family. In terms of assembly, component of the ATP synthase complex composed at least of ATP5F1A/subunit alpha, ATP5F1B/subunit beta, ATP5MC1/subunit c (homooctomer), MT-ATP6/subunit a, MT-ATP8/subunit 8, ATP5ME/subunit e, ATP5MF/subunit f, ATP5MG/subunit g, ATP5MK/subunit k, ATP5MJ/subunit j, ATP5F1C/subunit gamma, ATP5F1D/subunit delta, ATP5F1E/subunit epsilon, ATP5PF/subunit F6, ATP5PB/subunit b, ATP5PD/subunit d, ATP5PO/subunit OSCP. ATP synthase complex consists of a soluble F(1) head domain (subunits alpha(3) and beta(3)) - the catalytic core - and a membrane F(0) domain - the membrane proton channel (subunits c, a, 8, e, f, g, k and j). These two domains are linked by a central stalk (subunits gamma, delta, and epsilon) rotating inside the F1 region and a stationary peripheral stalk (subunits F6, b, d, and OSCP).

Its subcellular location is the mitochondrion. It localises to the mitochondrion inner membrane. Its function is as follows. Subunit b, of the mitochondrial membrane ATP synthase complex (F(1)F(0) ATP synthase or Complex V) that produces ATP from ADP in the presence of a proton gradient across the membrane which is generated by electron transport complexes of the respiratory chain. ATP synthase complex consist of a soluble F(1) head domain - the catalytic core - and a membrane F(1) domain - the membrane proton channel. These two domains are linked by a central stalk rotating inside the F(1) region and a stationary peripheral stalk. During catalysis, ATP synthesis in the catalytic domain of F(1) is coupled via a rotary mechanism of the central stalk subunits to proton translocation. In vivo, can only synthesize ATP although its ATP hydrolase activity can be activated artificially in vitro. Part of the complex F(0) domain. Part of the complex F(0) domain and the peripheric stalk, which acts as a stator to hold the catalytic alpha(3)beta(3) subcomplex and subunit a/ATP6 static relative to the rotary elements. This chain is ATP synthase peripheral stalk subunit b, mitochondrial, found in Homo sapiens (Human).